The sequence spans 344 residues: Dihydroorotate dehydrogenase (quinone) (344 aa).

Residues 62 to 66 (AGLDK) and threonine 86 each bind FMN. Lysine 66 contributes to the substrate binding site. Residue 111 to 115 (NRMGF) coordinates substrate. Residues asparagine 139 and asparagine 172 each contribute to the FMN site. Asparagine 172 provides a ligand contact to substrate. Serine 175 functions as the Nucleophile in the catalytic mechanism. Asparagine 177 is a substrate binding site. Residues lysine 217 and threonine 245 each contribute to the FMN site. 246–247 (NT) contributes to the substrate binding site. Residues glycine 268, glycine 297, and 318–319 (YS) each bind FMN.

This sequence belongs to the dihydroorotate dehydrogenase family. Type 2 subfamily. As to quaternary structure, monomer. Requires FMN as cofactor.

The protein localises to the cell membrane. It catalyses the reaction (S)-dihydroorotate + a quinone = orotate + a quinol. Its pathway is pyrimidine metabolism; UMP biosynthesis via de novo pathway; orotate from (S)-dihydroorotate (quinone route): step 1/1. In terms of biological role, catalyzes the conversion of dihydroorotate to orotate with quinone as electron acceptor. The polypeptide is Dihydroorotate dehydrogenase (quinone) (Chromobacterium violaceum (strain ATCC 12472 / DSM 30191 / JCM 1249 / CCUG 213 / NBRC 12614 / NCIMB 9131 / NCTC 9757 / MK)).